A 348-amino-acid chain; its full sequence is Alanine racemase (348 aa).

The Proton acceptor; specific for D-alanine role is filled by lysine 34. Lysine 34 is modified (N6-(pyridoxal phosphate)lysine). Position 127 (arginine 127) interacts with substrate. Residue tyrosine 243 is the Proton acceptor; specific for L-alanine of the active site. Residue methionine 291 participates in substrate binding.

It belongs to the alanine racemase family. It depends on pyridoxal 5'-phosphate as a cofactor.

The enzyme catalyses L-alanine = D-alanine. The protein operates within amino-acid biosynthesis; D-alanine biosynthesis; D-alanine from L-alanine: step 1/1. Its function is as follows. Catalyzes the interconversion of L-alanine and D-alanine. May also act on other amino acids. The polypeptide is Alanine racemase (alr) (Coprothermobacter proteolyticus (strain ATCC 35245 / DSM 5265 / OCM 4 / BT)).